We begin with the raw amino-acid sequence, 461 residues long: UDP-N-acetylmuramate--L-alanine ligase (461 aa).

111–117 (GAHGKTT) provides a ligand contact to ATP.

This sequence belongs to the MurCDEF family.

It is found in the cytoplasm. The catalysed reaction is UDP-N-acetyl-alpha-D-muramate + L-alanine + ATP = UDP-N-acetyl-alpha-D-muramoyl-L-alanine + ADP + phosphate + H(+). It participates in cell wall biogenesis; peptidoglycan biosynthesis. Cell wall formation. The chain is UDP-N-acetylmuramate--L-alanine ligase from Pelotomaculum thermopropionicum (strain DSM 13744 / JCM 10971 / SI).